The chain runs to 448 residues: T-box transcription factor TBX19 (448 aa).

The T-box DNA-binding region spans 45–218; it reads LEDAPLWQRF…YNPFAKAFLD (174 aa).

Its subcellular location is the nucleus. In terms of biological role, transcriptional regulator involved in developmental processes. Can activate POMC gene expression and repress the alpha glycoprotein subunit and thyroid-stimulating hormone beta promoters. The protein is T-box transcription factor TBX19 of Homo sapiens (Human).